We begin with the raw amino-acid sequence, 501 residues long: L-arabinose isomerase (501 aa).

Residues glutamate 306, glutamate 333, histidine 350, and histidine 450 each contribute to the Mn(2+) site.

Belongs to the arabinose isomerase family. As to quaternary structure, homohexamer. Requires Mn(2+) as cofactor.

It carries out the reaction beta-L-arabinopyranose = L-ribulose. Its pathway is carbohydrate degradation; L-arabinose degradation via L-ribulose; D-xylulose 5-phosphate from L-arabinose (bacterial route): step 1/3. Its function is as follows. Catalyzes the conversion of L-arabinose to L-ribulose. The polypeptide is L-arabinose isomerase (Serratia proteamaculans (strain 568)).